Reading from the N-terminus, the 518-residue chain is Zinc finger protein 449 (518 aa).

Residues 30–112 (RQRFRQFQYR…SLIEDLQREL (83 aa)) form the SCAN box domain. Residues 292–304 (NPTLGETPENSNL) show a composition bias toward polar residues. Residues 292–325 (NPTLGETPENSNLEEPLNPKPHKKKSPGEKPHRC) form a disordered region. 7 consecutive C2H2-type zinc fingers follow at residues 323–345 (HRCP…QRIH), 351–373 (HKCP…QRLH), 379–401 (YECT…QRTH), 407–429 (YKCL…LKTH), 435–457 (HRCH…QRTH), 463–485 (FKCN…LRIH), and 491–513 (YKCT…QVTH).

Belongs to the krueppel C2H2-type zinc-finger protein family.

Its subcellular location is the nucleus. Its function is as follows. May be involved in transcriptional regulation. This is Zinc finger protein 449 (ZNF449) from Pan troglodytes (Chimpanzee).